A 142-amino-acid chain; its full sequence is MSLRPCLTPSSMQYSDIYIHTTPHPHTPHHTHHTHTTPTPTPHPHTHTPTPERSLSLRLRQAKPDQPVSQITLHYPTSPLVTLTHSTIPPQPPSISLCTTTNRPSTITVTLQLPISNSTTTYPTISHLLLTILLFYPPLLKR.

Residues 19-54 (IHTTPHPHTPHHTHHTHTTPTPTPHPHTHTPTPERS) are disordered. Basic residues predominate over residues 26–35 (HTPHHTHHTH).

This is an uncharacterized protein from Saccharomyces cerevisiae (strain ATCC 204508 / S288c) (Baker's yeast).